Here is a 452-residue protein sequence, read N- to C-terminus: Keratin, type II cytoskeletal 80 (452 aa).

The head stretch occupies residues 1–82; it reads MAYRSCVVGF…DPAVQQQKNQ (82 aa). Ser-45 is subject to Phosphoserine. The segment at 82 to 118 is coil 1A; sequence QEKEEMKVLNDKFASLIGKVQALEQRNQLLETRWGFL. The IF rod domain occupies 83–394; it reads EKEEMKVLND…KLMEGEESRM (312 aa). The tract at residues 119–135 is linker 1; the sequence is QGQGSATFDLSHHYETF. Positions 136-227 are coil 1B; that stretch reads QGRLQEELRK…TVYEQELKDL (92 aa). The tract at residues 228–251 is linker 12; it reads TAQVKDVSVTVGLDSRCHIDLSGI. Positions 252-390 are coil 2; the sequence is VEEVKAQYDA…ATYHKLMEGE (139 aa). Positions 391 to 452 are tail; that stretch reads ESRMDLPSTT…YLSQESEASE (62 aa). 2 stretches are compositionally biased toward polar residues: residues 411–421 and 443–452; these read TTASKSGLSKT and YLSQESEASE. Positions 411–452 are disordered; it reads TTASKSGLSKTPSRKKKNRGGPVIKITEMSEKYLSQESEASE.

It belongs to the intermediate filament family. In terms of assembly, heterotetramer of two type I and two type II keratins.

The chain is Keratin, type II cytoskeletal 80 (Krt80) from Rattus norvegicus (Rat).